Reading from the N-terminus, the 465-residue chain is MFIDGKWILREDLDILNPYTLEIIERITALDREETKYAIEVATENKDVMKELNPSKRYSLLMKIAEHISSKKDLFANTISVDVGKPIKQSRIEVDRTITAFRLSALYAKELRGETIPSENEIIFTKKEPVGVVGAITPFNFPLNLITHKIGPAIATGNAVVLHPSSKAPITAIYLTKVIEHVLKKMNIERGVFNLTTGNGEIVGDEIAKNEKINFLSFTGSVEVGELISKSSYMKKVALELGGNNPLIVLKDSDIELAAKSAVKSKFLNSGQVCISVGKVIVEEEVLETFTKKVIEETKKLVLGNPLDEKTDLGPLITPESALRVEILIKESISEGGELLIGGNRSNSLISPAVLNIDEDNILSKVEAFGPILPILKAKDDEHALNIANNSKYGLQAGIFTNDINKAMKFANKLEYGGVIVNGSPTFRKDNMPFGGIKKSGLGKEGIKYAVEEMCETKTVVIHNM.

Gly-220–Gly-225 is a binding site for NAD(+). Residues Glu-240 and Cys-274 contribute to the active site.

This sequence belongs to the aldehyde dehydrogenase family. As to quaternary structure, homotetramer.

The enzyme catalyses (S)-lactaldehyde + NAD(+) + H2O = (S)-lactate + NADH + 2 H(+). The protein operates within cofactor biosynthesis; coenzyme F420 biosynthesis. Involved in F420 biosynthesis through the oxidation of lactaldehyde to lactate. This chain is Lactaldehyde dehydrogenase, found in Methanococcus vannielii (strain ATCC 35089 / DSM 1224 / JCM 13029 / OCM 148 / SB).